Reading from the N-terminus, the 292-residue chain is Sulfhydrogenase 1 subunit gamma (292 aa).

Residues 15-115 enclose the FAD-binding FR-type domain; the sequence is YALHRVKVLK…RGPYGNGFPV (101 aa). Cys253, Cys258, Cys261, and Cys273 together coordinate [2Fe-2S] cluster.

In terms of assembly, heterotetramer of alpha, beta, gamma and delta subunits. The nickel-containing alpha and delta subunits constitute the hydrogenase activity. The beta and gamma subunits (flavin-containing dimer) constitute the sulfur reductase activity. FAD is required as a cofactor. Requires [2Fe-2S] cluster as cofactor.

Its subcellular location is the cytoplasm. The catalysed reaction is n sulfur + H2 = (n-1) sulfur + hydrogen sulfide + H(+). Stimulated by rubredoxin at pH 7.6 but not ferredoxin. Part of a bifunctional enzyme complex that functions as an NADPH-dependent hydrogen-evolving hydrogenase with sulfur reducing activity. May play a role in hydrogen cycling during fermentative growth. Activity not exhibited with NAD. The beta and gamma subunits form the sulfur reducing component that catalyzes the cytoplasmic production of hydrogen sulfide in the presence of elemental sulfur. Not active in the presence of sodium sulfate, sodium sulfite, sodium thiosulfate or cysteine. In Pyrococcus furiosus (strain ATCC 43587 / DSM 3638 / JCM 8422 / Vc1), this protein is Sulfhydrogenase 1 subunit gamma.